Consider the following 288-residue polypeptide: Protoheme IX farnesyltransferase (288 aa).

The next 9 helical transmembrane spans lie at 16–36 (VWSLLVFVGAIGAVIAIPYFN), 37–57 (LHYISLIVLATIAVMLGSMGA), 88–108 (INGLLFGLVLMFLSIAILAAF), 111–131 (LYAALFMGIGLFDNVFIYSYL), 138–158 (WNIILGGFSGGFPVVIGWYTV), 162–182 (FSILPWFLFLLVVVWIPIHVW), 210–230 (AICISSAAIILFAFSIIPAFF), 236–256 (VYMILASAIAVPMIFYSIVFV), and 265–285 (LKLFIYSSPYLAIIFVLVLIF).

This sequence belongs to the UbiA prenyltransferase family. Protoheme IX farnesyltransferase subfamily.

The protein resides in the cell membrane. It carries out the reaction heme b + (2E,6E)-farnesyl diphosphate + H2O = Fe(II)-heme o + diphosphate. It functions in the pathway porphyrin-containing compound metabolism; heme O biosynthesis; heme O from protoheme: step 1/1. In terms of biological role, converts heme B (protoheme IX) to heme O by substitution of the vinyl group on carbon 2 of heme B porphyrin ring with a hydroxyethyl farnesyl side group. This Thermoplasma acidophilum (strain ATCC 25905 / DSM 1728 / JCM 9062 / NBRC 15155 / AMRC-C165) protein is Protoheme IX farnesyltransferase.